We begin with the raw amino-acid sequence, 141 residues long: Small ribosomal subunit protein uS12 (141 aa).

The disordered stretch occupies residues 118–141 (TGVDKRRQQRSAYGAKRPKADKKK).

Belongs to the universal ribosomal protein uS12 family. As to quaternary structure, part of the 30S ribosomal subunit. Contacts proteins S8 and S17. May interact with IF1 in the 30S initiation complex.

With S4 and S5 plays an important role in translational accuracy. Functionally, interacts with and stabilizes bases of the 16S rRNA that are involved in tRNA selection in the A site and with the mRNA backbone. Located at the interface of the 30S and 50S subunits, it traverses the body of the 30S subunit contacting proteins on the other side and probably holding the rRNA structure together. The combined cluster of proteins S8, S12 and S17 appears to hold together the shoulder and platform of the 30S subunit. The sequence is that of Small ribosomal subunit protein uS12 from Mycoplasmoides gallisepticum (strain R(low / passage 15 / clone 2)) (Mycoplasma gallisepticum).